The chain runs to 95 residues: Integration host factor subunit beta (95 aa).

The disordered stretch occupies residues 56-76 (RAPRTGRNPKTGTSVELDGKY).

It belongs to the bacterial histone-like protein family. Heterodimer of an alpha and a beta chain.

In terms of biological role, this protein is one of the two subunits of integration host factor, a specific DNA-binding protein that functions in genetic recombination as well as in transcriptional and translational control. The sequence is that of Integration host factor subunit beta from Shewanella woodyi (strain ATCC 51908 / MS32).